Here is a 79-residue protein sequence, read N- to C-terminus: MPKRILQGVVVGDKNEKTVVVRVERRFAHPLLQKTVRRSKKYKAHDENNQYKIGDTVSIEECAPISKDKRWTVIAAQGK.

Belongs to the universal ribosomal protein uS17 family. In terms of assembly, part of the 30S ribosomal subunit.

Its function is as follows. One of the primary rRNA binding proteins, it binds specifically to the 5'-end of 16S ribosomal RNA. This Rhizobium etli (strain CIAT 652) protein is Small ribosomal subunit protein uS17.